The primary structure comprises 183 residues: Bifunctional protein PyrR (183 aa).

Residues 42-43, arginine 87, 104-112, arginine 137, and valine 161 contribute to the substrate site; these read TR and DDVLYTGRT. Residues 100 to 112 carry the PRPP-binding motif; that stretch reads VILVDDVLYTGRT.

Belongs to the purine/pyrimidine phosphoribosyltransferase family. PyrR subfamily.

It catalyses the reaction UMP + diphosphate = 5-phospho-alpha-D-ribose 1-diphosphate + uracil. Functionally, regulates the transcription of the pyrimidine nucleotide (pyr) operon in response to exogenous pyrimidines. Its function is as follows. Also displays a weak uracil phosphoribosyltransferase activity which is not physiologically significant. This is Bifunctional protein PyrR from Deinococcus radiodurans (strain ATCC 13939 / DSM 20539 / JCM 16871 / CCUG 27074 / LMG 4051 / NBRC 15346 / NCIMB 9279 / VKM B-1422 / R1).